The sequence spans 835 residues: Ubiquitin carboxyl-terminal hydrolase 26 (835 aa).

The disordered stretch occupies residues 102-128 (SQGSIRPARSDERCGEPSTSAQELNGS). The span at 118–128 (PSTSAQELNGS) shows a compositional bias: polar residues. Residues 286-816 (QGLPNVGNTC…TGYVFFYMHN (531 aa)) enclose the USP domain. Cys-295 (nucleophile) is an active-site residue. The tract at residues 597–747 (NRESEAQSGK…TRKVDPTKLN (151 aa)) is disordered. Composition is skewed to basic and acidic residues over residues 634 to 652 (LTKETEKLKKHEEEHRPSD) and 669 to 679 (KCNEGRSDKQI). Residues 683-708 (ALTQSRPKPISQEQTENLGKTTLSHT) show a composition bias toward polar residues. A compositionally biased stretch (low complexity) spans 709–725 (QDSSQSSQSSSDSSKSS). A compositionally biased stretch (basic and acidic residues) spans 726 to 747 (RCSDDLDKKAKPTRKVDPTKLN). Catalysis depends on His-771, which acts as the Proton acceptor.

Belongs to the peptidase C19 family. As to quaternary structure, interacts with RING1.

The protein resides in the nucleus. Its subcellular location is the cytoplasm. It localises to the cytoskeleton. It is found in the flagellum axoneme. The enzyme catalyses Thiol-dependent hydrolysis of ester, thioester, amide, peptide and isopeptide bonds formed by the C-terminal Gly of ubiquitin (a 76-residue protein attached to proteins as an intracellular targeting signal).. Functionally, deubiquitinase regulating several biological processes through the deubiquitination of components of these processes. Involved in somatic cell reprogramming through the 'Lys-48'-linked deubiquitination and stabilization of CBX4 and CBX6, two components of the polycomb-repressive complex 1 (PRC1). Also deubiquitinates and probably stabilizes the androgen receptor (AR), regulating the androgen receptor signaling pathway. May play a role in spermatogenesis. The sequence is that of Ubiquitin carboxyl-terminal hydrolase 26 from Mus musculus (Mouse).